The chain runs to 576 residues: Putative ankyrin repeat protein L86 (576 aa).

11 ANK repeats span residues 68 to 101 (HGWT…DPNI), 118 to 147 (TRIN…NVNF), 159 to 188 (SGGF…NPNI), 192 to 223 (KGNT…DLNS), 227 to 260 (KRKT…NPNI), 264 to 300 (KGNT…NPNI), 304 to 337 (SGIS…DPNI), 341 to 373 (QGLT…DPNI), 377 to 408 (KGKN…NPNA), 412 to 446 (KGRT…SLTD), and 448 to 480 (NGKK…TFDV).

The polypeptide is Putative ankyrin repeat protein L86 (Acanthamoeba polyphaga mimivirus (APMV)).